Reading from the N-terminus, the 1530-residue chain is Coiled-coil domain-containing protein 141 (1530 aa).

Phosphothreonine is present on Thr-91. Coiled-coil stretches lie at residues 642–706, 758–783, and 861–970; these read VKNE…EALM, VKEKSQQLKDLIHFHQKQKERIQDYE, and SNVS…KTSD. Residues 1210-1241 are disordered; the sequence is SPDDISLPPLPGSPESPLAPSDMEVEEPVSSS. Residues 1409–1530 enclose the Ig-like domain; the sequence is PNFSRLLSNV…VSLMYWLLTQ (122 aa).

Interacts with DISC1. Interacts preferentially with phosphorylated forms of myosin regulatory light chain (MRLC). Interacts (via the N-terminal region) with HDAC6; inhibits the deacetylase activity of HDAC6. Interacts with KIBRA (via the C-terminal region); retains AMPAR in the cytosol after internalization. Post-translationally, ubiquitinated and degradated by the CDC20-APC/C pathway. During brain development, CDC20-APC/C complex degrades CCDC141 after centrosome translocation into the dilated area. CCDC141 is restabilized in the dilation until the centrosome enters the dilation, at which point it is once again immediately destabilized by CDC20-APC/C complex. The oscillatory regulation of CCDC141 protein is needed for proper cortical migration. Phosphorylation at Thr-91 by PLK1 affects CCDC141 degradation.

The protein resides in the cytoplasm. It is found in the cytoskeleton. The protein localises to the microtubule organizing center. Its subcellular location is the centrosome. Plays a critical role in cortical radial and GnRH neurons migration during brain development. Regulates cortical radial migration by negatively controlling the activity of histone deacetylase 6 (HDAC6) and promotes centrosome maturation. CAMDI is required for dilation formation of cortical neurons during radial migration. Plays a critical role in learning and memory performance through regulation of AMPA-selective glutamate receptors (AMPARs) cell surface expression in competition with KIBRA. The protein is Coiled-coil domain-containing protein 141 (CCDC141) of Homo sapiens (Human).